The following is a 252-amino-acid chain: MKVIFNADDFGLTRGVNDGIVHAHLDGVVRSTTMMVGMPAEAHAVELANHLPELKVGLHLRFTAGRPLTEGQNLVGRDGDFTPYGQFWHRRDYDPIAIHNEAVAQVEYFLALGLNLSHIDSHHHAHTHPQFEPVIYDIARTYQVPLRSTGLAGEEEFGCRYHFTDHFYDKRVGHDSLIQHLLTLKEHYDVVEVMCHPAILDTALEACSGYAKQRELELAILTSDELKLSLRKHDIEVTDYSELIFAPLHSCV.

Mg(2+)-binding residues include H59 and H122.

Belongs to the YdjC deacetylase family. As to quaternary structure, homodimer. Mg(2+) serves as cofactor.

Its function is as follows. Probably catalyzes the deacetylation of acetylated carbohydrates an important step in the degradation of oligosaccharides. This is Carbohydrate deacetylase from Vibrio vulnificus (strain YJ016).